The primary structure comprises 260 residues: Snake venom serine protease homolog 1 (260 aa).

The signal sequence occupies residues 1-18 (MVLIRVLANLLLLQLSYA). The propeptide occupies 19–24 (QESSEL). Residues 25 to 251 (VIGGDECDIN…YTDWIEGIIA (227 aa)) form the Peptidase S1 domain. Intrachain disulfides connect Cys-31–Cys-165, Cys-52–Cys-68, Cys-100–Cys-258, Cys-144–Cys-212, Cys-176–Cys-191, and Cys-202–Cys-227. Asn-253 is a glycosylation site (N-linked (GlcNAc...) asparagine).

It belongs to the peptidase S1 family. Snake venom subfamily. As to expression, expressed by the venom gland.

The protein resides in the secreted. Functionally, snake venom serine protease homolog that may act in the hemostasis system of the prey. The protein is Snake venom serine protease homolog 1 of Bitis gabonica (Gaboon adder).